A 312-amino-acid chain; its full sequence is uncharacterized protein (312 aa).

At 1-14 the chain is on the extracellular side; that stretch reads MSIVETCISFVSTN. Residues 15-35 form a helical membrane-spanning segment; sequence PFYPFCTGLLLNCVVTPLYFW. The Cytoplasmic segment spans residues 36-41; sequence KTQNGR. A helical transmembrane segment spans residues 42 to 62; sequence IVVVSLLQFVVLYATAFISIG. Residues 63–179 are Extracellular-facing; it reads TDKSLYRNKW…LEYDQDTATE (117 aa). The 104-residue stretch at 70–173 folds into the FAD-binding FR-type domain; sequence NKWVALPLSK…KGPLGELEYD (104 aa). The chain crosses the membrane as a helical span at residues 180–200; it reads LGIIAGGSGITPVLQVLQEII. Residues 201 to 312 lie on the Cytoplasmic side of the membrane; sequence PSPEDLTHIS…GNGTDKVFVF (112 aa).

Belongs to the flavoprotein pyridine nucleotide cytochrome reductase family. FAD is required as a cofactor.

It is found in the membrane. This is an uncharacterized protein from Saccharomyces cerevisiae (strain ATCC 204508 / S288c) (Baker's yeast).